A 269-amino-acid polypeptide reads, in one-letter code: Phosphate import ATP-binding protein PstB 1 (269 aa).

The ABC transporter domain occupies 23 to 264 (LSTEDLNVYY…PKIKAAEDYV (242 aa)). 55–62 (GASGSGKS) is a binding site for ATP.

The protein belongs to the ABC transporter superfamily. Phosphate importer (TC 3.A.1.7) family. In terms of assembly, the complex is composed of two ATP-binding proteins (PstB), two transmembrane proteins (PstC and PstA) and a solute-binding protein (PstS).

It localises to the cell membrane. The enzyme catalyses phosphate(out) + ATP + H2O = ADP + 2 phosphate(in) + H(+). Part of the ABC transporter complex PstSACB involved in phosphate import. Responsible for energy coupling to the transport system. The polypeptide is Phosphate import ATP-binding protein PstB 1 (Latilactobacillus sakei subsp. sakei (strain 23K) (Lactobacillus sakei subsp. sakei)).